A 338-amino-acid polypeptide reads, in one-letter code: DNA-directed RNA polymerase subunit alpha (338 aa).

The tract at residues 1–234 is alpha N-terminal domain (alpha-NTD); sequence MIHKNWAELI…DQLSVFVNFD (234 aa). Residues 250 to 338 form an alpha C-terminal domain (alpha-CTD) region; the sequence is FDPRLLKKVD…DLAKRFDDQF (89 aa).

The protein belongs to the RNA polymerase alpha chain family. Homodimer. The RNAP catalytic core consists of 2 alpha, 1 beta, 1 beta' and 1 omega subunit. When a sigma factor is associated with the core the holoenzyme is formed, which can initiate transcription.

The catalysed reaction is RNA(n) + a ribonucleoside 5'-triphosphate = RNA(n+1) + diphosphate. DNA-dependent RNA polymerase catalyzes the transcription of DNA into RNA using the four ribonucleoside triphosphates as substrates. The protein is DNA-directed RNA polymerase subunit alpha of Paracoccus denitrificans (strain Pd 1222).